Consider the following 381-residue polypeptide: Queuine tRNA-ribosyltransferase (381 aa).

Catalysis depends on D96, which acts as the Proton acceptor. Residues 96–100, D150, Q193, and G220 contribute to the substrate site; that span reads DSGGF. The RNA binding stretch occupies residues 251–257; sequence GVGSPDS. D270 serves as the catalytic Nucleophile. Residues 275 to 279 form an RNA binding; important for wobble base 34 recognition region; it reads TRIAR. Residues C308, C310, C313, and H339 each contribute to the Zn(2+) site.

Belongs to the queuine tRNA-ribosyltransferase family. As to quaternary structure, homodimer. Within each dimer, one monomer is responsible for RNA recognition and catalysis, while the other monomer binds to the replacement base PreQ1. It depends on Zn(2+) as a cofactor.

It catalyses the reaction 7-aminomethyl-7-carbaguanine + guanosine(34) in tRNA = 7-aminomethyl-7-carbaguanosine(34) in tRNA + guanine. It participates in tRNA modification; tRNA-queuosine biosynthesis. Catalyzes the base-exchange of a guanine (G) residue with the queuine precursor 7-aminomethyl-7-deazaguanine (PreQ1) at position 34 (anticodon wobble position) in tRNAs with GU(N) anticodons (tRNA-Asp, -Asn, -His and -Tyr). Catalysis occurs through a double-displacement mechanism. The nucleophile active site attacks the C1' of nucleotide 34 to detach the guanine base from the RNA, forming a covalent enzyme-RNA intermediate. The proton acceptor active site deprotonates the incoming PreQ1, allowing a nucleophilic attack on the C1' of the ribose to form the product. After dissociation, two additional enzymatic reactions on the tRNA convert PreQ1 to queuine (Q), resulting in the hypermodified nucleoside queuosine (7-(((4,5-cis-dihydroxy-2-cyclopenten-1-yl)amino)methyl)-7-deazaguanosine). The polypeptide is Queuine tRNA-ribosyltransferase (Bacillus licheniformis (strain ATCC 14580 / DSM 13 / JCM 2505 / CCUG 7422 / NBRC 12200 / NCIMB 9375 / NCTC 10341 / NRRL NRS-1264 / Gibson 46)).